Reading from the N-terminus, the 229-residue chain is Enolase-phosphatase E1 (229 aa).

This sequence belongs to the HAD-like hydrolase superfamily. MasA/MtnC family. In terms of assembly, monomer. Mg(2+) is required as a cofactor.

The catalysed reaction is 5-methylsulfanyl-2,3-dioxopentyl phosphate + H2O = 1,2-dihydroxy-5-(methylsulfanyl)pent-1-en-3-one + phosphate. It functions in the pathway amino-acid biosynthesis; L-methionine biosynthesis via salvage pathway; L-methionine from S-methyl-5-thio-alpha-D-ribose 1-phosphate: step 3/6. Its pathway is amino-acid biosynthesis; L-methionine biosynthesis via salvage pathway; L-methionine from S-methyl-5-thio-alpha-D-ribose 1-phosphate: step 4/6. Functionally, bifunctional enzyme that catalyzes the enolization of 2,3-diketo-5-methylthiopentyl-1-phosphate (DK-MTP-1-P) into the intermediate 2-hydroxy-3-keto-5-methylthiopentenyl-1-phosphate (HK-MTPenyl-1-P), which is then dephosphorylated to form the acireductone 1,2-dihydroxy-3-keto-5-methylthiopentene (DHK-MTPene). The sequence is that of Enolase-phosphatase E1 from Pectobacterium atrosepticum (strain SCRI 1043 / ATCC BAA-672) (Erwinia carotovora subsp. atroseptica).